Here is a 245-residue protein sequence, read N- to C-terminus: UPF0280 protein UNCMA_16740 (245 aa).

This sequence belongs to the UPF0280 family.

This chain is UPF0280 protein UNCMA_16740, found in Methanocella arvoryzae (strain DSM 22066 / NBRC 105507 / MRE50).